Reading from the N-terminus, the 71-residue chain is ATP synthase F(0) complex subunit e, mitochondrial (71 aa).

Residue K34 is modified to N6-acetyllysine.

It belongs to the ATPase e subunit family. In terms of assembly, component of the ATP synthase complex composed at least of ATP5F1A/subunit alpha, ATP5F1B/subunit beta, ATP5MC1/subunit c (homooctomer), MT-ATP6/subunit a, MT-ATP8/subunit 8, ATP5ME/subunit e, ATP5MF/subunit f, ATP5MG/subunit g, ATP5MK/subunit k, ATP5MJ/subunit j, ATP5F1C/subunit gamma, ATP5F1D/subunit delta, ATP5F1E/subunit epsilon, ATP5PF/subunit F6, ATP5PB/subunit b, ATP5PD/subunit d, ATP5PO/subunit OSCP. ATP synthase complex consists of a soluble F(1) head domain (subunits alpha(3) and beta(3)) - the catalytic core - and a membrane F(0) domain - the membrane proton channel (subunits c, a, 8, e, f, g, k and j). These two domains are linked by a central stalk (subunits gamma, delta, and epsilon) rotating inside the F1 region and a stationary peripheral stalk (subunits F6, b, d, and OSCP).

It localises to the mitochondrion. Its subcellular location is the mitochondrion inner membrane. In terms of biological role, subunit e, of the mitochondrial membrane ATP synthase complex (F(1)F(0) ATP synthase or Complex V) that produces ATP from ADP in the presence of a proton gradient across the membrane which is generated by electron transport complexes of the respiratory chain. ATP synthase complex consist of a soluble F(1) head domain - the catalytic core - and a membrane F(1) domain - the membrane proton channel. These two domains are linked by a central stalk rotating inside the F(1) region and a stationary peripheral stalk. During catalysis, ATP synthesis in the catalytic domain of F(1) is coupled via a rotary mechanism of the central stalk subunits to proton translocation. In vivo, can only synthesize ATP although its ATP hydrolase activity can be activated artificially in vitro. Part of the complex F(0) domain. The sequence is that of ATP synthase F(0) complex subunit e, mitochondrial from Bos taurus (Bovine).